The sequence spans 519 residues: Sensory neuron membrane protein 2 (519 aa).

At 1–7 the chain is on the cytoplasmic side; it reads MLAKHSK. A helical transmembrane segment spans residues 8-28; sequence LFFTGSVVFLIVAIVLASWGF. Residues 29–469 lie on the Extracellular side of the membrane; the sequence is PKIISTRIQK…DAHALLSYAQ (441 aa). 7 N-linked (GlcNAc...) asparagine glycosylation sites follow: Asn44, Asn67, Asn104, Asn166, Asn229, Asn272, and Asn314. 3 cysteine pairs are disulfide-bonded: Cys268-Cys338, Cys299-Cys362, and Cys340-Cys351. Residues 470-490 form a helical membrane-spanning segment; sequence LARWIILAAAIILAIIATITV. Topologically, residues 491 to 519 are cytoplasmic; sequence ARSTSLISWPRNSNSVNFIIGPMVNDKMR.

The protein belongs to the CD36 family. In terms of tissue distribution, localizes to both male and female antennae but not the leg, wing, gut, head or thoracic ganglia. Detected throughout the sensory epithelium, associating with both sex-pheromone sensilla and plant-volatile sensilla. Differentially expressed among different sensilla and different neurons within a given sensillum.

The protein localises to the cell membrane. Its function is as follows. Plays an olfactory role that is not restricted to pheromone sensitivity. The chain is Sensory neuron membrane protein 2 from Manduca sexta (Tobacco hawkmoth).